Reading from the N-terminus, the 143-residue chain is Hemoglobin subunit alpha (143 aa).

A Globin domain is found at 2-143 (TLSDKDKSTV…VALALAERYR (142 aa)). His60 contacts O2. His89 contacts heme b.

It belongs to the globin family. In terms of assembly, heterotetramer of two alpha chains and two beta chains. Red blood cells.

Functionally, involved in oxygen transport from gills to the various peripheral tissues. The protein is Hemoglobin subunit alpha (hba) of Thunnus thynnus (Atlantic bluefin tuna).